Here is a 438-residue protein sequence, read N- to C-terminus: Gamma-glutamyl phosphate reductase (438 aa).

It belongs to the gamma-glutamyl phosphate reductase family.

It localises to the cytoplasm. It catalyses the reaction L-glutamate 5-semialdehyde + phosphate + NADP(+) = L-glutamyl 5-phosphate + NADPH + H(+). The protein operates within amino-acid biosynthesis; L-proline biosynthesis; L-glutamate 5-semialdehyde from L-glutamate: step 2/2. In terms of biological role, catalyzes the NADPH-dependent reduction of L-glutamate 5-phosphate into L-glutamate 5-semialdehyde and phosphate. The product spontaneously undergoes cyclization to form 1-pyrroline-5-carboxylate. This chain is Gamma-glutamyl phosphate reductase, found in Prochlorococcus marinus (strain MIT 9313).